A 205-amino-acid chain; its full sequence is Thiamine-phosphate synthase (205 aa).

Residues 34 to 38 (QLRCK) and Asn-66 contribute to the 4-amino-2-methyl-5-(diphosphooxymethyl)pyrimidine site. Residues Asp-67 and Asp-86 each contribute to the Mg(2+) site. Ser-105 contributes to the 4-amino-2-methyl-5-(diphosphooxymethyl)pyrimidine binding site. 131–133 (TTT) is a binding site for 2-[(2R,5Z)-2-carboxy-4-methylthiazol-5(2H)-ylidene]ethyl phosphate. Lys-134 serves as a coordination point for 4-amino-2-methyl-5-(diphosphooxymethyl)pyrimidine. Gly-163 contributes to the 2-[(2R,5Z)-2-carboxy-4-methylthiazol-5(2H)-ylidene]ethyl phosphate binding site.

It belongs to the thiamine-phosphate synthase family. Mg(2+) serves as cofactor.

The catalysed reaction is 2-[(2R,5Z)-2-carboxy-4-methylthiazol-5(2H)-ylidene]ethyl phosphate + 4-amino-2-methyl-5-(diphosphooxymethyl)pyrimidine + 2 H(+) = thiamine phosphate + CO2 + diphosphate. The enzyme catalyses 2-(2-carboxy-4-methylthiazol-5-yl)ethyl phosphate + 4-amino-2-methyl-5-(diphosphooxymethyl)pyrimidine + 2 H(+) = thiamine phosphate + CO2 + diphosphate. It catalyses the reaction 4-methyl-5-(2-phosphooxyethyl)-thiazole + 4-amino-2-methyl-5-(diphosphooxymethyl)pyrimidine + H(+) = thiamine phosphate + diphosphate. Its pathway is cofactor biosynthesis; thiamine diphosphate biosynthesis; thiamine phosphate from 4-amino-2-methyl-5-diphosphomethylpyrimidine and 4-methyl-5-(2-phosphoethyl)-thiazole: step 1/1. Condenses 4-methyl-5-(beta-hydroxyethyl)thiazole monophosphate (THZ-P) and 2-methyl-4-amino-5-hydroxymethyl pyrimidine pyrophosphate (HMP-PP) to form thiamine monophosphate (TMP). The protein is Thiamine-phosphate synthase of Neisseria meningitidis serogroup B (strain ATCC BAA-335 / MC58).